Here is a 199-residue protein sequence, read N- to C-terminus: Shikimate kinase (199 aa).

14–19 (GSGKST) lines the ATP pocket. Ser-18 serves as a coordination point for Mg(2+). Substrate-binding residues include Asp-36, Arg-60, and Gly-82. Position 120 (Arg-120) interacts with ATP. Arg-147 contributes to the substrate binding site.

It belongs to the shikimate kinase family. In terms of assembly, monomer. The cofactor is Mg(2+).

It localises to the cytoplasm. It catalyses the reaction shikimate + ATP = 3-phosphoshikimate + ADP + H(+). Its pathway is metabolic intermediate biosynthesis; chorismate biosynthesis; chorismate from D-erythrose 4-phosphate and phosphoenolpyruvate: step 5/7. In terms of biological role, catalyzes the specific phosphorylation of the 3-hydroxyl group of shikimic acid using ATP as a cosubstrate. The protein is Shikimate kinase of Chlorobium limicola (strain DSM 245 / NBRC 103803 / 6330).